Reading from the N-terminus, the 269-residue chain is Putative ABC transporter ATP-binding protein PF0528 (269 aa).

The 232-residue stretch at 6–237 folds into the ABC transporter domain; it reads IVVENLYSSY…EILKRNNLDV (232 aa). An ATP-binding site is contributed by 39 to 46; that stretch reads GPNGAGKS.

Belongs to the ABC transporter superfamily.

Its subcellular location is the cell membrane. In terms of biological role, probably part of an ABC transporter complex. Responsible for energy coupling to the transport system. This chain is Putative ABC transporter ATP-binding protein PF0528, found in Pyrococcus furiosus (strain ATCC 43587 / DSM 3638 / JCM 8422 / Vc1).